A 126-amino-acid polypeptide reads, in one-letter code: Large ribosomal subunit protein uL22 (126 aa).

This sequence belongs to the universal ribosomal protein uL22 family. As to quaternary structure, part of the 50S ribosomal subunit.

In terms of biological role, this protein binds specifically to 23S rRNA; its binding is stimulated by other ribosomal proteins, e.g. L4, L17, and L20. It is important during the early stages of 50S assembly. It makes multiple contacts with different domains of the 23S rRNA in the assembled 50S subunit and ribosome. The globular domain of the protein is located near the polypeptide exit tunnel on the outside of the subunit, while an extended beta-hairpin is found that lines the wall of the exit tunnel in the center of the 70S ribosome. The polypeptide is Large ribosomal subunit protein uL22 (Cereibacter sphaeroides (strain ATCC 17029 / ATH 2.4.9) (Rhodobacter sphaeroides)).